The sequence spans 231 residues: Orotidine 5'-phosphate decarboxylase (231 aa).

Residues D11, K32, 59 to 68, T118, R180, Q189, G209, and R210 contribute to the substrate site; that span reads DLKFHDIPNT. The active-site Proton donor is K61.

This sequence belongs to the OMP decarboxylase family. Type 1 subfamily. As to quaternary structure, homodimer.

It carries out the reaction orotidine 5'-phosphate + H(+) = UMP + CO2. It participates in pyrimidine metabolism; UMP biosynthesis via de novo pathway; UMP from orotate: step 2/2. Its function is as follows. Catalyzes the decarboxylation of orotidine 5'-monophosphate (OMP) to uridine 5'-monophosphate (UMP). The sequence is that of Orotidine 5'-phosphate decarboxylase from Synechocystis sp. (strain ATCC 27184 / PCC 6803 / Kazusa).